Reading from the N-terminus, the 196-residue chain is MIPLVLEESGGSERVFDIYSRLLRERIIFLGEQVTSDTANRIVAQLLFLEAEDPEKDIYMYINSPGGSVYDGLGIFDTMQHVKPDIHTVCVGLAASMGAFLLAAGTKGKRSSLRHSRIMIHQPLGGARGQASDIRIQADEILYLKERLNTELSERTGKELETIKGDTDRDFYMSPQEAVEYGLIDLVLDKKPVKNI.

Ser-96 serves as the catalytic Nucleophile. His-121 is a catalytic residue.

It belongs to the peptidase S14 family. Fourteen ClpP subunits assemble into 2 heptameric rings which stack back to back to give a disk-like structure with a central cavity, resembling the structure of eukaryotic proteasomes.

It is found in the cytoplasm. It carries out the reaction Hydrolysis of proteins to small peptides in the presence of ATP and magnesium. alpha-casein is the usual test substrate. In the absence of ATP, only oligopeptides shorter than five residues are hydrolyzed (such as succinyl-Leu-Tyr-|-NHMec, and Leu-Tyr-Leu-|-Tyr-Trp, in which cleavage of the -Tyr-|-Leu- and -Tyr-|-Trp bonds also occurs).. In terms of biological role, cleaves peptides in various proteins in a process that requires ATP hydrolysis. Has a chymotrypsin-like activity. Plays a major role in the degradation of misfolded proteins. The polypeptide is ATP-dependent Clp protease proteolytic subunit 1 (Prochlorococcus marinus subsp. pastoris (strain CCMP1986 / NIES-2087 / MED4)).